The primary structure comprises 616 residues: Dihydroxy-acid dehydratase (616 aa).

Aspartate 81 serves as a coordination point for Mg(2+). A [2Fe-2S] cluster-binding site is contributed by cysteine 122. Aspartate 123 and lysine 124 together coordinate Mg(2+). An N6-carboxylysine modification is found at lysine 124. Cysteine 195 is a binding site for [2Fe-2S] cluster. Mg(2+) is bound at residue glutamate 491. The active-site Proton acceptor is the serine 517.

The protein belongs to the IlvD/Edd family. In terms of assembly, homodimer. The cofactor is [2Fe-2S] cluster. Requires Mg(2+) as cofactor.

It carries out the reaction (2R)-2,3-dihydroxy-3-methylbutanoate = 3-methyl-2-oxobutanoate + H2O. The enzyme catalyses (2R,3R)-2,3-dihydroxy-3-methylpentanoate = (S)-3-methyl-2-oxopentanoate + H2O. It participates in amino-acid biosynthesis; L-isoleucine biosynthesis; L-isoleucine from 2-oxobutanoate: step 3/4. Its pathway is amino-acid biosynthesis; L-valine biosynthesis; L-valine from pyruvate: step 3/4. Functions in the biosynthesis of branched-chain amino acids. Catalyzes the dehydration of (2R,3R)-2,3-dihydroxy-3-methylpentanoate (2,3-dihydroxy-3-methylvalerate) into 2-oxo-3-methylpentanoate (2-oxo-3-methylvalerate) and of (2R)-2,3-dihydroxy-3-methylbutanoate (2,3-dihydroxyisovalerate) into 2-oxo-3-methylbutanoate (2-oxoisovalerate), the penultimate precursor to L-isoleucine and L-valine, respectively. The chain is Dihydroxy-acid dehydratase from Salmonella gallinarum (strain 287/91 / NCTC 13346).